We begin with the raw amino-acid sequence, 324 residues long: Beta-ketoacyl-[acyl-carrier-protein] synthase III (324 aa).

Residues cysteine 112 and histidine 251 contribute to the active site. Residues 252 to 256 are ACP-binding; the sequence is QANIR. Asparagine 281 is an active-site residue.

It belongs to the thiolase-like superfamily. FabH family. Homodimer.

It is found in the cytoplasm. The enzyme catalyses malonyl-[ACP] + acetyl-CoA + H(+) = 3-oxobutanoyl-[ACP] + CO2 + CoA. Its pathway is lipid metabolism; fatty acid biosynthesis. In terms of biological role, catalyzes the condensation reaction of fatty acid synthesis by the addition to an acyl acceptor of two carbons from malonyl-ACP. Catalyzes the first condensation reaction which initiates fatty acid synthesis and may therefore play a role in governing the total rate of fatty acid production. Possesses both acetoacetyl-ACP synthase and acetyl transacylase activities. Its substrate specificity determines the biosynthesis of branched-chain and/or straight-chain of fatty acids. The polypeptide is Beta-ketoacyl-[acyl-carrier-protein] synthase III (Desulfotalea psychrophila (strain LSv54 / DSM 12343)).